The following is a 63-amino-acid chain: Sec-independent protein translocase protein TatA (63 aa).

Residues 1 to 21 traverse the membrane as a helical segment; it reads MGSLSMWHWLIVLVIVLLLFG. Positions 43-63 are disordered; it reads MTDEDAPETAKTVDHKADETK. Positions 53 to 63 are enriched in basic and acidic residues; that stretch reads KTVDHKADETK.

It belongs to the TatA/E family. The Tat system comprises two distinct complexes: a TatABC complex, containing multiple copies of TatA, TatB and TatC subunits, and a separate TatA complex, containing only TatA subunits. Substrates initially bind to the TatABC complex, which probably triggers association of the separate TatA complex to form the active translocon.

The protein resides in the cell inner membrane. Part of the twin-arginine translocation (Tat) system that transports large folded proteins containing a characteristic twin-arginine motif in their signal peptide across membranes. TatA could form the protein-conducting channel of the Tat system. This is Sec-independent protein translocase protein TatA from Rhizobium etli (strain ATCC 51251 / DSM 11541 / JCM 21823 / NBRC 15573 / CFN 42).